A 235-amino-acid chain; its full sequence is Tumor necrosis factor (235 aa).

Residues 1–35 (MSTESMIRDVELAEGPLPKKAGGPQGSKRCLCLSL) lie on the Cytoplasmic side of the membrane. Phosphoserine; by CK1 is present on S2. 2 N6-myristoyl lysine lipidation sites follow: K19 and K20. The chain crosses the membrane as a helical; Signal-anchor for type II membrane protein span at residues 36-56 (FSFLLVAGATTLFCLLHFRVI). Topologically, residues 57-235 (GPQEEEQSPN…GQVYFGIIAL (179 aa)) are extracellular. Residues 91 to 235 (PLAHVVANPQ…GQVYFGIIAL (145 aa)) form the THD domain. Cysteines 148 and 179 form a disulfide.

This sequence belongs to the tumor necrosis factor family. Homotrimer. Interacts with SPPL2B. Post-translationally, the soluble form derives from the membrane form by proteolytic processing. The membrane-bound form is further proteolytically processed by SPPL2A or SPPL2B through regulated intramembrane proteolysis producing TNF intracellular domains (ICD1 and ICD2) released in the cytosol and TNF C-domain 1 and C-domain 2 secreted into the extracellular space. The membrane form, but not the soluble form, is phosphorylated on serine residues. Dephosphorylation of the membrane form occurs by binding to soluble TNFRSF1A/TNFR1. In terms of processing, O-glycosylated; glycans contain galactose, N-acetylgalactosamine and N-acetylneuraminic acid. Post-translationally, the soluble form is demyristoylated by SIRT6, promoting its secretion.

The protein localises to the cell membrane. The protein resides in the membrane. Its subcellular location is the secreted. Its function is as follows. Cytokine that binds to TNFRSF1A/TNFR1 and TNFRSF1B/TNFBR. It is mainly secreted by macrophages and can induce cell death of certain tumor cell lines. It is potent pyrogen causing fever by direct action or by stimulation of interleukin-1 secretion and is implicated in the induction of cachexia, Under certain conditions it can stimulate cell proliferation and induce cell differentiation. Induces insulin resistance in adipocytes via inhibition of insulin-induced IRS1 tyrosine phosphorylation and insulin-induced glucose uptake. Induces GKAP42 protein degradation in adipocytes which is partially responsible for TNF-induced insulin resistance. Plays a role in angiogenesis by inducing VEGF production synergistically with IL1B and IL6. Promotes osteoclastogenesis and therefore mediates bone resorption. In terms of biological role, the TNF intracellular domain (ICD) form induces IL12 production in dendritic cells. The chain is Tumor necrosis factor (TNF) from Oryctolagus cuniculus (Rabbit).